The primary structure comprises 917 residues: Spermatogenesis-associated protein 31D3 (917 aa).

The helical transmembrane segment at 29-49 threads the bilayer; sequence FICLSGLGLFILYLFYMVLTL. Disordered regions lie at residues 55 to 80, 152 to 195, and 773 to 797; these read EKNN…KDRK, SVSP…PPPL, and SQET…LRSN. Residues 63-74 are compositionally biased toward basic residues; the sequence is HQGRARRKRKSV. Positions 152-163 are enriched in low complexity; that stretch reads SVSPLASSASGA. Residues 164-177 are compositionally biased toward polar residues; sequence ESSFTLASTPSATT. Over residues 782–797 the composition is skewed to basic and acidic residues; the sequence is LLHDPETSSEEDLRSN.

The protein belongs to the SPATA31 family.

It is found in the membrane. Functionally, may play a role in spermatogenesis. This is Spermatogenesis-associated protein 31D3 (SPATA31D3) from Homo sapiens (Human).